A 67-amino-acid chain; its full sequence is Alpha-conotoxin-like Pu1.1 (67 aa).

The signal sequence occupies residues 1-21 (MGMRMMFTVFLLVVLATTVVS). Residues 22–46 (FTSDRTSDGRNAAFNAFDLIALTAR) constitute a propeptide that is removed on maturation. Gln47 carries the pyrrolidone carboxylic acid modification. 2 cysteine pairs are disulfide-bonded: Cys49-Cys55 and Cys50-Cys63. Positions 51-53 (NVP) are lacks the Ser-Xaa-Pro motif that is crucial for potent interaction with nAChR. Cys63 carries the post-translational modification Cysteine amide.

This sequence belongs to the conotoxin A superfamily. As to expression, expressed by the venom duct.

Its subcellular location is the secreted. Functionally, alpha-conotoxins act on postsynaptic membranes, they bind to the nicotinic acetylcholine receptors (nAChR) and thus inhibit them. Has possibly a distinct nAChR binding mode from other alpha-conotoxins, due to a different three residue motif (lacks the Ser-Xaa-Pro motif). This chain is Alpha-conotoxin-like Pu1.1, found in Conus pulicarius (Flea-bitten cone).